The sequence spans 335 residues: Adenosine deaminase (335 aa).

Zn(2+) is bound by residues His-12 and His-14. Residues His-14 and Asp-16 each coordinate substrate. A Zn(2+)-binding site is contributed by His-197. Glu-200 serves as the catalytic Proton donor. Asp-278 is a binding site for Zn(2+).

It belongs to the metallo-dependent hydrolases superfamily. Adenosine and AMP deaminases family. Adenosine deaminase subfamily. The cofactor is Zn(2+).

The enzyme catalyses adenosine + H2O + H(+) = inosine + NH4(+). It carries out the reaction 2'-deoxyadenosine + H2O + H(+) = 2'-deoxyinosine + NH4(+). Catalyzes the hydrolytic deamination of adenosine and 2-deoxyadenosine. The sequence is that of Adenosine deaminase from Clostridium botulinum (strain Loch Maree / Type A3).